Here is a 314-residue protein sequence, read N- to C-terminus: MKKGINRVVLVGTGAVGCSYAYSMINQGVAEEFVLVDVNEAKAEGEAMDLSHAVPFSPSPTKVWSGSYADCKDADLVVITAGLPQKPGETRLDLVEKNTKIFKQIVRGIMDSGFDGIFLIATNPVDILTYVTWKESGLPKERVIGSGTTLDSARFRYMLGDYLDVDPRNVHAYIVGEHGDTELPVWSHATIGVQKLETILANNEQYKQEDLDKIFENVRDAAYHIIERKGATYYGIGMSLLRVTKAILNNENSVLTVSAYLEGQYGEKDAYVGVPAVINREGVREIVELELNEDEKAKFAHSVKVLKETMAPVL.

NAD(+) is bound by residues valine 16, aspartate 37, lysine 42, tyrosine 68, and 82–83; that span reads GL. Substrate is bound by residues glutamine 85, arginine 91, and 123-126; that span reads NPVD. NAD(+) contacts are provided by residues 121 to 123 and serine 146; that span reads ATN. Residue 151-154 participates in substrate binding; it reads DSAR. The beta-D-fructose 1,6-bisphosphate site is built by arginine 156 and histidine 171. Catalysis depends on histidine 178, which acts as the Proton acceptor. Phosphotyrosine is present on tyrosine 223. Threonine 232 is a binding site for substrate.

The protein belongs to the LDH/MDH superfamily. LDH family. As to quaternary structure, homotetramer.

It localises to the cytoplasm. It catalyses the reaction (S)-lactate + NAD(+) = pyruvate + NADH + H(+). It participates in fermentation; pyruvate fermentation to lactate; (S)-lactate from pyruvate: step 1/1. Its activity is regulated as follows. Allosterically activated by fructose 1,6-bisphosphate (FBP). Functionally, catalyzes the conversion of lactate to pyruvate. This chain is L-lactate dehydrogenase 2, found in Bacillus cereus (strain ATCC 10987 / NRS 248).